We begin with the raw amino-acid sequence, 1164 residues long: DNA-directed RNA polymerase subunit beta (1164 aa).

Disordered regions lie at residues 975–994 and 1143–1164; these read RSSL…GKSN and ANAA…MDVS. Composition is skewed to basic and acidic residues over residues 981–991 and 1152–1164; these read RDGERQVDDFG and SRDE…MDVS.

This sequence belongs to the RNA polymerase beta chain family. The RNAP catalytic core consists of 2 alpha, 1 beta, 1 beta' and 1 omega subunit. When a sigma factor is associated with the core the holoenzyme is formed, which can initiate transcription.

The enzyme catalyses RNA(n) + a ribonucleoside 5'-triphosphate = RNA(n+1) + diphosphate. Functionally, DNA-dependent RNA polymerase catalyzes the transcription of DNA into RNA using the four ribonucleoside triphosphates as substrates. The polypeptide is DNA-directed RNA polymerase subunit beta (Corynebacterium jeikeium (strain K411)).